The primary structure comprises 564 residues: Phosphomethylpyrimidine synthase (564 aa).

Substrate contacts are provided by residues N203, M232, Y261, H297, 317-319 (SRG), 358-361 (DGLR), and E397. H401 contributes to the Zn(2+) binding site. Residue Y424 participates in substrate binding. H465 contacts Zn(2+). [4Fe-4S] cluster is bound by residues C541, C544, and C549.

This sequence belongs to the ThiC family. It depends on [4Fe-4S] cluster as a cofactor.

The catalysed reaction is 5-amino-1-(5-phospho-beta-D-ribosyl)imidazole + S-adenosyl-L-methionine = 4-amino-2-methyl-5-(phosphooxymethyl)pyrimidine + CO + 5'-deoxyadenosine + formate + L-methionine + 3 H(+). It functions in the pathway cofactor biosynthesis; thiamine diphosphate biosynthesis. In terms of biological role, catalyzes the synthesis of the hydroxymethylpyrimidine phosphate (HMP-P) moiety of thiamine from aminoimidazole ribotide (AIR) in a radical S-adenosyl-L-methionine (SAM)-dependent reaction. The sequence is that of Phosphomethylpyrimidine synthase from Bacteroides fragilis (strain ATCC 25285 / DSM 2151 / CCUG 4856 / JCM 11019 / LMG 10263 / NCTC 9343 / Onslow / VPI 2553 / EN-2).